A 195-amino-acid chain; its full sequence is Thymidine kinase (195 aa).

ATP contacts are provided by residues 15-22 (GSMFSGKT) and 91-94 (DEAN). The active-site Proton acceptor is E92. Zn(2+) contacts are provided by C148, C151, C186, and C189.

The protein belongs to the thymidine kinase family. Homotetramer.

The protein localises to the cytoplasm. The catalysed reaction is thymidine + ATP = dTMP + ADP + H(+). The protein is Thymidine kinase of Halobacterium salinarum (strain ATCC 29341 / DSM 671 / R1).